The primary structure comprises 192 residues: Fe/S biogenesis protein NfuA (192 aa).

[4Fe-4S] cluster is bound by residues C149 and C152.

Belongs to the NfuA family. Homodimer. Requires [4Fe-4S] cluster as cofactor.

Its function is as follows. Involved in iron-sulfur cluster biogenesis. Binds a 4Fe-4S cluster, can transfer this cluster to apoproteins, and thereby intervenes in the maturation of Fe/S proteins. Could also act as a scaffold/chaperone for damaged Fe/S proteins. This is Fe/S biogenesis protein NfuA from Shewanella putrefaciens (strain CN-32 / ATCC BAA-453).